The chain runs to 287 residues: Nucleotide-binding protein HD_0584 (287 aa).

Residue 8–15 (GRSGSGKS) participates in ATP binding. Position 56–59 (56–59 (DIRN)) interacts with GTP.

Belongs to the RapZ-like family.

Its function is as follows. Displays ATPase and GTPase activities. This Haemophilus ducreyi (strain 35000HP / ATCC 700724) protein is Nucleotide-binding protein HD_0584.